A 665-amino-acid polypeptide reads, in one-letter code: MLLESNTKNEEIKDNLKYLVLLSKQYPTINEAATEIINLQAILNLPKGTEHFLSDVHGEYEQFIHVLKNASGVIKRKIDDIFGNRLMQSEKKSLATLIYYPEQKLDIILKQEKNIDDWYKITLYRLIEVCRNVSSKYTRSKVRKALPKEFSYIIEELLHEQPKGVDKQEYYDEIIKTIISIDRAKEFITAISKLIQRLVVDRLHIIGDIFDRGPRADIIMDKLEEYHAVDIQWGNHDILWMGAASGSSVCMANVIRISARYANLSTIEDGYGINLLPLATFAMDFYGNDKCKNFEPKIESDKSYTVKEIELIGKMHKAIAIIQFKLEGEAIKRHPEFKMEHRMLLNKINFEDSTIELDGKKYKLNDTSFPTIDKNDPYKLIDEEREVVEKLRSSFVNSEKLNRHVRFLFSHGNLYLKFNSNLLYHGCIPLNEDGTFKEVLIGSHKYKGKALLDKLDVLARKSFFYEENSKNSKYENDMIWYLWSGPFSPLFGKEKMTTFERYFIDDKKTHYEKKDPYYHYRDDEDICINILREFGLDSEQAHIINGHVPVESKNGENPIKANGKLIVIDGGFSKAYQSKTGIAGYTLIYNSFGLQLVSHELFETTEKAIKEETDIISSTVIFEKSVRRKRVGDTDIGKDLKKQLYELNLLLLAYKKGLIKEFVKS.

The protein belongs to the FBPase class 3 family. It depends on Mn(2+) as a cofactor.

The enzyme catalyses beta-D-fructose 1,6-bisphosphate + H2O = beta-D-fructose 6-phosphate + phosphate. It participates in carbohydrate biosynthesis; gluconeogenesis. The protein is Fructose-1,6-bisphosphatase class 3 of Clostridium acetobutylicum (strain ATCC 824 / DSM 792 / JCM 1419 / IAM 19013 / LMG 5710 / NBRC 13948 / NRRL B-527 / VKM B-1787 / 2291 / W).